The following is a 283-amino-acid chain: NFU1 iron-sulfur cluster scaffold homolog, mitochondrial (283 aa).

Residues 1–30 (MSKFLSQAALNTLRNTRLGSRQLVRSFAGI) constitute a mitochondrion transit peptide. Residues 182-250 (IKELLDTRIR…IPEVESVEQV (69 aa)) form a nifU region. 2 residues coordinate [4Fe-4S] cluster: Cys219 and Cys222.

The protein belongs to the NifU family.

The protein resides in the mitochondrion. Its function is as follows. Molecular scaffold for [Fe-S] cluster assembly of mitochondrial iron-sulfur proteins. This chain is NFU1 iron-sulfur cluster scaffold homolog, mitochondrial, found in Drosophila yakuba (Fruit fly).